We begin with the raw amino-acid sequence, 430 residues long: Adenylosuccinate synthetase (430 aa).

GTP contacts are provided by residues 12 to 18 and 40 to 42; these read GDEGKGK and GHT. Catalysis depends on aspartate 13, which acts as the Proton acceptor. The Mg(2+) site is built by aspartate 13 and glycine 40. Residues 13 to 16, 38 to 41, threonine 128, arginine 142, glutamine 223, threonine 238, and arginine 302 contribute to the IMP site; these read DEGK and NAGH. Histidine 41 acts as the Proton donor in catalysis. Residue 298 to 304 participates in substrate binding; that stretch reads TTTGRPR. Residues arginine 304, 330–332, and 412–414 each bind GTP; these read SID and SVG.

It belongs to the adenylosuccinate synthetase family. In terms of assembly, homodimer. Requires Mg(2+) as cofactor.

Its subcellular location is the cytoplasm. It catalyses the reaction IMP + L-aspartate + GTP = N(6)-(1,2-dicarboxyethyl)-AMP + GDP + phosphate + 2 H(+). It participates in purine metabolism; AMP biosynthesis via de novo pathway; AMP from IMP: step 1/2. Plays an important role in the de novo pathway of purine nucleotide biosynthesis. Catalyzes the first committed step in the biosynthesis of AMP from IMP. In Streptococcus sanguinis (strain SK36), this protein is Adenylosuccinate synthetase.